A 1037-amino-acid chain; its full sequence is Multidrug resistance protein MdtF (1037 aa).

Topologically, residues 1–9 are cytoplasmic; that stretch reads MANYFIDRP. Residues 10–30 traverse the membrane as a helical segment; the sequence is VFAWVLAIIMMLAGGLAIMNL. Residues 31–338 lie on the Periplasmic side of the membrane; that stretch reads PVAQYPQIAP…TTPFIEISIQ (308 aa). The helical transmembrane segment at 339 to 359 threads the bilayer; it reads EVFKTLVEAIILVFLVMYLFL. Over 360 to 369 the chain is Cytoplasmic; it reads QNFRATIIPT. A helical membrane pass occupies residues 370 to 390; that stretch reads IAVPVVILGTFAILSAVGFTI. Residues 391–392 are Periplasmic-facing; the sequence is NT. A helical membrane pass occupies residues 393–413; sequence LTMFGMVLAIGLLVDDAIVVV. Topologically, residues 414–441 are cytoplasmic; the sequence is ENVERVIAEDKLPPKEATHKSMGQIQRA. Residues 442-462 form a helical membrane-spanning segment; the sequence is LVGIAVVLSAVFMPMAFMSGA. Residues 463-471 are Periplasmic-facing; sequence TGEIYRQFS. A helical transmembrane segment spans residues 472 to 492; the sequence is ITLISSMLLSVFVAMSLTPAL. The Cytoplasmic segment spans residues 493 to 534; the sequence is CATILKAAPEGGHKPNALFARFNTLFEKSTQHYTDSTRSLLR. The chain crosses the membrane as a helical span at residues 535-555; sequence CTGRYMVIYLLICAGMAVLFL. Over 556–870 the chain is Periplasmic; it reads RTPTSFLPEE…SYQEALSSNQ (315 aa). A helical membrane pass occupies residues 871–891; that stretch reads APALYAISLVVVFLALAALYE. A topological domain (cytoplasmic) is located at residue Ser892. A helical transmembrane segment spans residues 893-913; sequence WSIPFSVMLVVPLGVVGALLA. The Periplasmic segment spans residues 914–927; it reads TDLRGLSNDVYFQV. Residues 928–948 traverse the membrane as a helical segment; that stretch reads GLLTTIGLSAKNAILIVEFAV. The Cytoplasmic segment spans residues 949 to 972; the sequence is EMMQKEGKTPIEAIIEAARMRLRP. The helical transmembrane segment at 973–993 threads the bilayer; it reads ILMTSLAFILGVLPLVISHGA. At 994 to 1006 the chain is on the periplasmic side; that stretch reads GSGAQNAVGTGVM. The chain crosses the membrane as a helical span at residues 1007-1027; sequence GGMFAATVLAIYFVPVFFVVV. The Cytoplasmic portion of the chain corresponds to 1028–1037; sequence EHLFARFKKA.

This sequence belongs to the resistance-nodulation-cell division (RND) (TC 2.A.6) family. Homotrimer. Part of the tripartite efflux system MdtEF-TolC, which is composed of an inner membrane transporter, MdtF, a membrane fusion protein, MdtE, and an outer membrane component, TolC. The complex forms a large protein conduit and can translocate molecules across both the inner and outer membranes.

Its subcellular location is the cell inner membrane. In terms of biological role, part of the tripartite efflux system MdtEF-TolC, which confers resistance to various compounds. The sequence is that of Multidrug resistance protein MdtF (mdtF) from Escherichia coli O157:H7.